Consider the following 197-residue polypeptide: C-type lectin domain family 3 member A (197 aa).

Residues 1–24 (MAKNGLVIYILVITLLLDQTSCHA) form the signal peptide. 3 cysteine pairs are disulfide-bonded: C68-C78, C95-C191, and C167-C183. Residues 74–192 (FHKKCYLAAE…CHSSKRYICE (119 aa)) form the C-type lectin domain.

It is found in the secreted. Its function is as follows. Promotes cell adhesion to laminin and fibronectin. This is C-type lectin domain family 3 member A (CLEC3A) from Bos taurus (Bovine).